Reading from the N-terminus, the 1341-residue chain is Pleckstrin homology domain-containing family G member 3 (1341 aa).

The disordered stretch occupies residues 1 to 68; sequence MPVSTALHQD…PNSNNNSSGW (68 aa). A compositionally biased stretch (low complexity) spans 18–29; sequence SLVSTTSSSGSS. Composition is skewed to polar residues over residues 42–51 and 59–68; these read SEASAQNGTG and PNSNNNSSGW. At Ser76 the chain carries Phosphoserine. The 180-residue stretch at 93 to 272 folds into the DH domain; sequence YLGRVVREIV…TCVAWYINDM (180 aa). The PH domain maps to 296–394; sequence DLTTYGELVL…WTHHIKRLIL (99 aa). A phosphoserine mark is found at Ser433 and Ser502. The disordered stretch occupies residues 433 to 482; sequence SQDEVSSHVRQGRRQSEPGHTLFSRATLPSRQQGFEMPGLKGRRKSEPTR. 2 disordered regions span residues 508-657 and 684-715; these read DFGQ…EFPE and PEGS…LLPP. Acidic residues-rich tracts occupy residues 529 to 541 and 570 to 580; these read ELEE…EEEE and GSEEEEEEEES. Phosphoserine occurs at positions 571, 694, 695, 737, 759, 762, and 766. The segment covering 695–707 has biased composition (acidic residues); the sequence is SEEEEEEEMEAAQ. The segment at 775-832 is disordered; sequence SIGDSLSNPPTPEVIIGADMVTDNGPSVNGTESPSAGSGCPTEQDRSSCKKKESALST. Residues 798-810 show a composition bias toward polar residues; that stretch reads NGPSVNGTESPSA. A compositionally biased stretch (basic and acidic residues) spans 817–832; the sequence is EQDRSSCKKKESALST. Phosphoserine is present on residues Ser862, Ser899, Ser900, and Ser947. 4 disordered regions span residues 876–930, 939–958, 1071–1097, and 1117–1162; these read SRFN…EFCP, ERME…SQAN, KVTP…SGGK, and HGTS…PFDT. Positions 939–948 are enriched in basic and acidic residues; it reads ERMESSERSP. Positions 949 to 958 are enriched in polar residues; the sequence is RTGSGQSQAN. Ser1129, Ser1134, Ser1136, Ser1141, Ser1155, Ser1158, and Ser1201 each carry phosphoserine. The span at 1135 to 1162 shows a compositional bias: polar residues; it reads FSPSAVSPRTTSPGARSSARSPLSPFDT. Disordered regions lie at residues 1204–1249 and 1271–1341; these read ENIV…LNGG and KGPH…NSVG. Positions 1309 to 1320 are enriched in basic and acidic residues; the sequence is QPKEHGPRDSAD.

It is found in the cytoplasm. The protein resides in the cytoskeleton. In terms of biological role, plays a role in controlling cell polarity and cell motility by selectively binding newly polymerized actin and activating RAC1 and CDC42 to enhance local actin polymerization. This chain is Pleckstrin homology domain-containing family G member 3, found in Mus musculus (Mouse).